Reading from the N-terminus, the 152-residue chain is Acidic phospholipase A2 (152 aa).

A signal peptide spans 1 to 21 (MNPAHLLVLSAVCVSLLGASS). A propeptide spanning residues 22–27 (IPPQPL) is cleaved from the precursor. 7 cysteine pairs are disulfide-bonded: Cys38–Cys104, Cys54–Cys151, Cys56–Cys72, Cys71–Cys132, Cys78–Cys125, Cys88–Cys118, and Cys111–Cys123. Tyr55, Gly57, and Gly59 together coordinate Ca(2+). The active site involves His75. Asp76 contacts Ca(2+). Asp126 is a catalytic residue.

It belongs to the phospholipase A2 family. Group I subfamily. D49 sub-subfamily. Ca(2+) is required as a cofactor. As to expression, expressed by the venom gland.

The protein localises to the secreted. The enzyme catalyses a 1,2-diacyl-sn-glycero-3-phosphocholine + H2O = a 1-acyl-sn-glycero-3-phosphocholine + a fatty acid + H(+). PLA2 catalyzes the calcium-dependent hydrolysis of the 2-acyl groups in 3-sn-phosphoglycerides. In Ophiophagus hannah (King cobra), this protein is Acidic phospholipase A2.